A 271-amino-acid chain; its full sequence is Formamidopyrimidine-DNA glycosylase (271 aa).

Pro2 (schiff-base intermediate with DNA) is an active-site residue. Residue Glu3 is the Proton donor of the active site. The active-site Proton donor; for beta-elimination activity is Lys58. Residues His91, Arg110, and Arg152 each coordinate DNA. The FPG-type zinc finger occupies 237 to 271 (WVYGRAGQSCRQCGELVSKTRQGQRSTFFCARCQH). The active-site Proton donor; for delta-elimination activity is the Arg261.

This sequence belongs to the FPG family. Monomer. Requires Zn(2+) as cofactor.

The enzyme catalyses Hydrolysis of DNA containing ring-opened 7-methylguanine residues, releasing 2,6-diamino-4-hydroxy-5-(N-methyl)formamidopyrimidine.. The catalysed reaction is 2'-deoxyribonucleotide-(2'-deoxyribose 5'-phosphate)-2'-deoxyribonucleotide-DNA = a 3'-end 2'-deoxyribonucleotide-(2,3-dehydro-2,3-deoxyribose 5'-phosphate)-DNA + a 5'-end 5'-phospho-2'-deoxyribonucleoside-DNA + H(+). In terms of biological role, involved in base excision repair of DNA damaged by oxidation or by mutagenic agents. Acts as a DNA glycosylase that recognizes and removes damaged bases. Has a preference for oxidized purines, such as 7,8-dihydro-8-oxoguanine (8-oxoG). Has AP (apurinic/apyrimidinic) lyase activity and introduces nicks in the DNA strand. Cleaves the DNA backbone by beta-delta elimination to generate a single-strand break at the site of the removed base with both 3'- and 5'-phosphates. This chain is Formamidopyrimidine-DNA glycosylase, found in Nitrosomonas europaea (strain ATCC 19718 / CIP 103999 / KCTC 2705 / NBRC 14298).